The primary structure comprises 86 residues: uncharacterized protein (86 aa).

The signal sequence occupies residues Met1–Ala22.

This sequence belongs to the BhsA/McbA family.

The protein resides in the periplasm. This is an uncharacterized protein from Escherichia coli O6:H1 (strain CFT073 / ATCC 700928 / UPEC).